A 345-amino-acid polypeptide reads, in one-letter code: NADH-quinone oxidoreductase subunit H (345 aa).

A run of 8 helical transmembrane segments spans residues 13-33, 84-104, 115-135, 161-181, 190-210, 248-268, 278-298, and 309-329; these read VLII…LLFL, FMLA…VIPF, VAIL…IMGG, IGLI…SAIV, FFSW…ISAL, YIAI…GWLS, IWMV…KAIV, and LGWK…AFAA.

Belongs to the complex I subunit 1 family. In terms of assembly, NDH-1 is composed of 14 different subunits. Subunits NuoA, H, J, K, L, M, N constitute the membrane sector of the complex.

The protein localises to the cell inner membrane. The enzyme catalyses a quinone + NADH + 5 H(+)(in) = a quinol + NAD(+) + 4 H(+)(out). Functionally, NDH-1 shuttles electrons from NADH, via FMN and iron-sulfur (Fe-S) centers, to quinones in the respiratory chain. The immediate electron acceptor for the enzyme in this species is believed to be ubiquinone. Couples the redox reaction to proton translocation (for every two electrons transferred, four hydrogen ions are translocated across the cytoplasmic membrane), and thus conserves the redox energy in a proton gradient. This subunit may bind ubiquinone. The chain is NADH-quinone oxidoreductase subunit H from Dinoroseobacter shibae (strain DSM 16493 / NCIMB 14021 / DFL 12).